Here is a 237-residue protein sequence, read N- to C-terminus: Thiamine-phosphate synthase (237 aa).

Residues 41–45 (QLRDK) and asparagine 73 each bind 4-amino-2-methyl-5-(diphosphooxymethyl)pyrimidine. Positions 74 and 93 each coordinate Mg(2+). Residue serine 112 participates in 4-amino-2-methyl-5-(diphosphooxymethyl)pyrimidine binding. Residue 143-145 (TPT) participates in 2-[(2R,5Z)-2-carboxy-4-methylthiazol-5(2H)-ylidene]ethyl phosphate binding. Lysine 146 contacts 4-amino-2-methyl-5-(diphosphooxymethyl)pyrimidine. Glycine 192 contributes to the 2-[(2R,5Z)-2-carboxy-4-methylthiazol-5(2H)-ylidene]ethyl phosphate binding site.

It belongs to the thiamine-phosphate synthase family. It depends on Mg(2+) as a cofactor.

It carries out the reaction 2-[(2R,5Z)-2-carboxy-4-methylthiazol-5(2H)-ylidene]ethyl phosphate + 4-amino-2-methyl-5-(diphosphooxymethyl)pyrimidine + 2 H(+) = thiamine phosphate + CO2 + diphosphate. It catalyses the reaction 2-(2-carboxy-4-methylthiazol-5-yl)ethyl phosphate + 4-amino-2-methyl-5-(diphosphooxymethyl)pyrimidine + 2 H(+) = thiamine phosphate + CO2 + diphosphate. The enzyme catalyses 4-methyl-5-(2-phosphooxyethyl)-thiazole + 4-amino-2-methyl-5-(diphosphooxymethyl)pyrimidine + H(+) = thiamine phosphate + diphosphate. The protein operates within cofactor biosynthesis; thiamine diphosphate biosynthesis; thiamine phosphate from 4-amino-2-methyl-5-diphosphomethylpyrimidine and 4-methyl-5-(2-phosphoethyl)-thiazole: step 1/1. Functionally, condenses 4-methyl-5-(beta-hydroxyethyl)thiazole monophosphate (THZ-P) and 2-methyl-4-amino-5-hydroxymethyl pyrimidine pyrophosphate (HMP-PP) to form thiamine monophosphate (TMP). This chain is Thiamine-phosphate synthase, found in Arthrobacter sp. (strain FB24).